The primary structure comprises 20 residues: Thrombin-like enzyme okinaxobin-2 (20 aa).

One can recognise a Peptidase S1 domain in the interval 1-20 (VVGGDECNINEHRFLVALYY).

Belongs to the peptidase S1 family. Snake venom subfamily. As to quaternary structure, monomer. In terms of processing, glycosylated. Expressed by the venom gland.

The protein resides in the secreted. Its activity is regulated as follows. Strongly inactivated by diisopropylfluorophosphate (DFP) and to a lesser extent by tosyl-L-lysine chloromethyl ketone (TLCK). Functionally, thrombin-like snake venom serine protease. Releases both fibrinopeptides A and B from fibrinogen (FGA and FGB) to form fibrin clots. This chain is Thrombin-like enzyme okinaxobin-2, found in Ovophis okinavensis (Ryukyu Island pit viper).